A 126-amino-acid polypeptide reads, in one-letter code: uncharacterized protein (126 aa).

Basic residues-rich tracts occupy residues 21–31 (RKKRKKRKKRR) and 41–83 (RILK…RKRR). Residues 21-83 (RKKRKKRKKR…RSPRKRRKRR (63 aa)) form a disordered region.

This is an uncharacterized protein from Saccharomyces cerevisiae (strain ATCC 204508 / S288c) (Baker's yeast).